We begin with the raw amino-acid sequence, 265 residues long: DNA-binding dual transcriptional regulator Rns (265 aa).

Residues histidine 20 and arginine 75 each coordinate decanoate. The HTH araC/xylS-type domain maps to aspartate 164–tyrosine 261. DNA-binding regions (H-T-H motif) lie at residues glycine 181–asparagine 202 and isoleucine 228–tyrosine 251.

As to quaternary structure, homodimer; each subunit binds one decanoate molecule.

It is found in the cytoplasm. Its activity is regulated as follows. Rns-dependent expression of pilins and outer membrane proteins CexE-alpha and CexE-epsilon are inhibited in vivo by decanoic acid (decanoate); has no effect on expression of DnaK or flagellins. Decanoate relieves Rns-dependent repression of nlpA. Its function is as follows. A transcription factor required for the expression of the CS1 and CS2 adhesins of enterotoxigenic E.coli. Required for expression of pilins and some outer membrane lipoproteins. Represses expression of nlpA. The sequence is that of DNA-binding dual transcriptional regulator Rns from Escherichia coli.